Reading from the N-terminus, the 63-residue chain is MKVNDRVTVKTDGGPRREGVVLEVEEFSEGVMYLVSLADYPAGVWFFNEVDSQDGTFVGPLSQ.

The protein belongs to the DsrB family.

The protein is Protein DsrB of Yersinia pseudotuberculosis serotype O:3 (strain YPIII).